The chain runs to 277 residues: Phosphatidylserine decarboxylase proenzyme (277 aa).

Catalysis depends on charge relay system; for autoendoproteolytic cleavage activity residues D88, H144, and S242. S242 functions as the Schiff-base intermediate with substrate; via pyruvic acid; for decarboxylase activity in the catalytic mechanism. The residue at position 242 (S242) is a Pyruvic acid (Ser); by autocatalysis.

Belongs to the phosphatidylserine decarboxylase family. PSD-B subfamily. Prokaryotic type I sub-subfamily. Heterodimer of a large membrane-associated beta subunit and a small pyruvoyl-containing alpha subunit. It depends on pyruvate as a cofactor. Post-translationally, is synthesized initially as an inactive proenzyme. Formation of the active enzyme involves a self-maturation process in which the active site pyruvoyl group is generated from an internal serine residue via an autocatalytic post-translational modification. Two non-identical subunits are generated from the proenzyme in this reaction, and the pyruvate is formed at the N-terminus of the alpha chain, which is derived from the carboxyl end of the proenzyme. The autoendoproteolytic cleavage occurs by a canonical serine protease mechanism, in which the side chain hydroxyl group of the serine supplies its oxygen atom to form the C-terminus of the beta chain, while the remainder of the serine residue undergoes an oxidative deamination to produce ammonia and the pyruvoyl prosthetic group on the alpha chain. During this reaction, the Ser that is part of the protease active site of the proenzyme becomes the pyruvoyl prosthetic group, which constitutes an essential element of the active site of the mature decarboxylase.

It is found in the cell membrane. It carries out the reaction a 1,2-diacyl-sn-glycero-3-phospho-L-serine + H(+) = a 1,2-diacyl-sn-glycero-3-phosphoethanolamine + CO2. It participates in phospholipid metabolism; phosphatidylethanolamine biosynthesis; phosphatidylethanolamine from CDP-diacylglycerol: step 2/2. In terms of biological role, catalyzes the formation of phosphatidylethanolamine (PtdEtn) from phosphatidylserine (PtdSer). The polypeptide is Phosphatidylserine decarboxylase proenzyme (Psychrobacter cryohalolentis (strain ATCC BAA-1226 / DSM 17306 / VKM B-2378 / K5)).